The chain runs to 183 residues: ATP-dependent protease subunit HslV (183 aa).

Residue threonine 7 is part of the active site. Na(+) is bound by residues glycine 162, cysteine 165, and threonine 168.

The protein belongs to the peptidase T1B family. HslV subfamily. As to quaternary structure, a double ring-shaped homohexamer of HslV is capped on each side by a ring-shaped HslU homohexamer. The assembly of the HslU/HslV complex is dependent on binding of ATP.

It is found in the cytoplasm. The enzyme catalyses ATP-dependent cleavage of peptide bonds with broad specificity.. Its activity is regulated as follows. Allosterically activated by HslU binding. Functionally, protease subunit of a proteasome-like degradation complex believed to be a general protein degrading machinery. In Alkalilimnicola ehrlichii (strain ATCC BAA-1101 / DSM 17681 / MLHE-1), this protein is ATP-dependent protease subunit HslV.